An 80-amino-acid polypeptide reads, in one-letter code: Sec-independent protein translocase protein TatA (80 aa).

The helical transmembrane segment at Met-1–Thr-21 threads the bilayer. Residues Lys-39–Ser-80 are disordered. A compositionally biased stretch (basic and acidic residues) spans Ser-67–Ser-80.

This sequence belongs to the TatA/E family. In terms of assembly, the Tat system comprises two distinct complexes: a TatABC complex, containing multiple copies of TatA, TatB and TatC subunits, and a separate TatA complex, containing only TatA subunits. Substrates initially bind to the TatABC complex, which probably triggers association of the separate TatA complex to form the active translocon.

The protein resides in the cell inner membrane. Its function is as follows. Part of the twin-arginine translocation (Tat) system that transports large folded proteins containing a characteristic twin-arginine motif in their signal peptide across membranes. TatA could form the protein-conducting channel of the Tat system. The sequence is that of Sec-independent protein translocase protein TatA from Hahella chejuensis (strain KCTC 2396).